Consider the following 508-residue polypeptide: Glycerol kinase (508 aa).

Residue T15 coordinates ADP. Residues T15, S16, and S17 each coordinate ATP. Residue T15 participates in sn-glycerol 3-phosphate binding. R19 lines the ADP pocket. Sn-glycerol 3-phosphate-binding residues include R85, E86, Y138, and D251. Glycerol-binding residues include R85, E86, Y138, D251, and Q252. Residues T273, G317, and G419 each coordinate ADP. Residues T273, G317, and G419 each contribute to the ATP site.

It belongs to the FGGY kinase family.

It catalyses the reaction glycerol + ATP = sn-glycerol 3-phosphate + ADP + H(+). It functions in the pathway polyol metabolism; glycerol degradation via glycerol kinase pathway; sn-glycerol 3-phosphate from glycerol: step 1/1. Its activity is regulated as follows. Inhibited by fructose 1,6-bisphosphate (FBP). Its function is as follows. Key enzyme in the regulation of glycerol uptake and metabolism. Catalyzes the phosphorylation of glycerol to yield sn-glycerol 3-phosphate. The protein is Glycerol kinase of Mycoplasma genitalium (strain ATCC 33530 / DSM 19775 / NCTC 10195 / G37) (Mycoplasmoides genitalium).